The chain runs to 704 residues: Polyribonucleotide nucleotidyltransferase (704 aa).

The Mg(2+) site is built by Asp-487 and Asp-493. The KH domain occupies 554–613 (PRLLTIKIHPDKIREVIGKGGSTIQAITKETGTQIDIQDDGTIIIASVNAIAAQAAKSRI). An S1 motif domain is found at 623-691 (GRIYEGKVAK…KQGRIRLSIK (69 aa)).

It belongs to the polyribonucleotide nucleotidyltransferase family. Component of the RNA degradosome, which is a multiprotein complex involved in RNA processing and mRNA degradation. Mg(2+) serves as cofactor.

Its subcellular location is the cytoplasm. It catalyses the reaction RNA(n+1) + phosphate = RNA(n) + a ribonucleoside 5'-diphosphate. Its function is as follows. Involved in mRNA degradation. Catalyzes the phosphorolysis of single-stranded polyribonucleotides processively in the 3'- to 5'-direction. The chain is Polyribonucleotide nucleotidyltransferase from Xanthomonas campestris pv. campestris (strain B100).